The sequence spans 289 residues: Diaminopimelate epimerase (289 aa).

Positions 13, 52, and 72 each coordinate substrate. The active-site Proton donor is the cysteine 81. Substrate-binding positions include glycine 82–asparagine 83, asparagine 167, asparagine 201, and glutamate 219–arginine 220. Cysteine 228 functions as the Proton acceptor in the catalytic mechanism. Glycine 229–threonine 230 serves as a coordination point for substrate.

This sequence belongs to the diaminopimelate epimerase family. Homodimer.

It is found in the cytoplasm. The enzyme catalyses (2S,6S)-2,6-diaminopimelate = meso-2,6-diaminopimelate. It functions in the pathway amino-acid biosynthesis; L-lysine biosynthesis via DAP pathway; DL-2,6-diaminopimelate from LL-2,6-diaminopimelate: step 1/1. Catalyzes the stereoinversion of LL-2,6-diaminopimelate (L,L-DAP) to meso-diaminopimelate (meso-DAP), a precursor of L-lysine and an essential component of the bacterial peptidoglycan. This chain is Diaminopimelate epimerase, found in Caulobacter sp. (strain K31).